Here is a 446-residue protein sequence, read N- to C-terminus: Transcription factor Dp-2 (446 aa).

The residue at position 2 (threonine 2) is an N-acetylthreonine. Serine 24 is subject to Phosphoserine. The tract at residues 60 to 82 (PQMIISTPQRLTSSGSVLIGSPY) is interaction with CEBPA. The Nuclear localization signal signature appears at 103-118 (GDRKRARKFIDSDFSE). Serine 122 is modified (phosphoserine). Residues 129–210 (GKGLRHFSMK…KKEIKWIGLP (82 aa)) mediate DNA binding. The DEF box motif lies at 176-210 (DQKNIRRRVYDALNVLMAMNIISKEKKEIKWIGLP). The interval 219 to 292 (NLEIEKQRRI…RKTVIDCSIS (74 aa)) is dimerization. Residues 229 to 261 (ERIKQKRAQLQELLLQQIAFKNLVQRNRQNEQQ) are DCB1. A DCB2 region spans residues 274 to 330 (LPFIIINTSRKTVIDCSISSDKFEYLFNFDNTFEIHDDIEVLKRMGMSFGLESGKCS). Positions 409 to 419 (SHQSSSAASHC) are enriched in low complexity. The segment at 409–446 (SHQSSSAASHCSESRGETPCSFNDEDEEDDEEDSSSPE) is disordered. Acidic residues predominate over residues 431 to 446 (NDEDEEDDEEDSSSPE).

Belongs to the E2F/DP family. Component of the DRTF1/E2F transcription factor complex. Forms heterodimers with E2F family members. The complex can interact with hypophosphorylated retinoblastoma protein RB1 and related proteins (RBL1 and RBL2) that inhibit the E2F transactivation domain. During the cell cycle, RB becomes phosphorylated in mid-to-late G1 phase, detaches from the DRTF1/E2F complex rendering E2F transcriptionally active. Viral oncoproteins, notably E1A, T-antigen and HPV E7, are capable of sequestering RB protein, thus releasing the active complex. Interacts with GMCL. Component of the DREAM complex (also named LINC complex) at least composed of E2F4, E2F5, LIN9, LIN37, LIN52, LIN54, MYBL1, MYBL2, RBL1, RBL2, RBBP4, TFDP1 and TFDP2. The complex exists in quiescent cells where it represses cell cycle-dependent genes. It dissociates in S phase when LIN9, LIN37, LIN52 and LIN54 form a subcomplex that binds to MYBL2. The complex TFDP2:E2F1 interacts with CEBPA; the interaction prevents CEBPA binding to target genes promoters and represses its transcriptional activity. Post-translationally, ser-24 is probably phosphorylated by CDK2. High levels in heart and skeletal muscle. Also found in placenta, kidney, brain, lung and liver. The presence as well as the abundance of the different transcripts appear to vary significantly in different tissues and cell lines.

It is found in the nucleus. Can stimulate E2F-dependent transcription. Binds DNA cooperatively with E2F family members through the E2 recognition site, 5'-TTTC[CG]CGC-3', found in the promoter region of a number of genes whose products are involved in cell cycle regulation or in DNA replication. The TFDP2:E2F complex functions in the control of cell-cycle progression from G1 to S phase. The E2F1:DP complex appears to mediate both cell proliferation and apoptosis. Blocks adipocyte differentiation by repressing CEBPA binding to its target gene promoters. The chain is Transcription factor Dp-2 (TFDP2) from Homo sapiens (Human).